A 418-amino-acid chain; its full sequence is Serine hydroxymethyltransferase (418 aa).

(6S)-5,6,7,8-tetrahydrofolate contacts are provided by residues L121 and 125-127 (GHL). K230 is modified (N6-(pyridoxal phosphate)lysine). (6S)-5,6,7,8-tetrahydrofolate contacts are provided by residues E246 and 355–357 (SPF).

This sequence belongs to the SHMT family. As to quaternary structure, homodimer. Pyridoxal 5'-phosphate serves as cofactor.

The protein resides in the cytoplasm. The enzyme catalyses (6R)-5,10-methylene-5,6,7,8-tetrahydrofolate + glycine + H2O = (6S)-5,6,7,8-tetrahydrofolate + L-serine. Its pathway is one-carbon metabolism; tetrahydrofolate interconversion. It participates in amino-acid biosynthesis; glycine biosynthesis; glycine from L-serine: step 1/1. Functionally, catalyzes the reversible interconversion of serine and glycine with tetrahydrofolate (THF) serving as the one-carbon carrier. This reaction serves as the major source of one-carbon groups required for the biosynthesis of purines, thymidylate, methionine, and other important biomolecules. Also exhibits THF-independent aldolase activity toward beta-hydroxyamino acids, producing glycine and aldehydes, via a retro-aldol mechanism. The sequence is that of Serine hydroxymethyltransferase from Streptococcus pneumoniae (strain Hungary19A-6).